Here is a 283-residue protein sequence, read N- to C-terminus: tRNA-cytidine(32) 2-sulfurtransferase (283 aa).

Positions 37–42 (SGGKDS) match the PP-loop motif motif. Residues cysteine 112, cysteine 115, and cysteine 203 each contribute to the [4Fe-4S] cluster site.

Belongs to the TtcA family. As to quaternary structure, homodimer. The cofactor is Mg(2+). It depends on [4Fe-4S] cluster as a cofactor.

It localises to the cytoplasm. The catalysed reaction is cytidine(32) in tRNA + S-sulfanyl-L-cysteinyl-[cysteine desulfurase] + AH2 + ATP = 2-thiocytidine(32) in tRNA + L-cysteinyl-[cysteine desulfurase] + A + AMP + diphosphate + H(+). It functions in the pathway tRNA modification. In terms of biological role, catalyzes the ATP-dependent 2-thiolation of cytidine in position 32 of tRNA, to form 2-thiocytidine (s(2)C32). The sulfur atoms are provided by the cysteine/cysteine desulfurase (IscS) system. This is tRNA-cytidine(32) 2-sulfurtransferase from Legionella pneumophila (strain Corby).